The chain runs to 201 residues: Small ribosomal subunit protein uS4c (201 aa).

Residues methionine 89–asparagine 150 form the S4 RNA-binding domain.

It belongs to the universal ribosomal protein uS4 family. As to quaternary structure, part of the 30S ribosomal subunit. Contacts protein S5. The interaction surface between S4 and S5 is involved in control of translational fidelity.

It is found in the plastid. The protein localises to the chloroplast. Functionally, one of the primary rRNA binding proteins, it binds directly to 16S rRNA where it nucleates assembly of the body of the 30S subunit. In terms of biological role, with S5 and S12 plays an important role in translational accuracy. The sequence is that of Small ribosomal subunit protein uS4c (rps4) from Acorus calamus (Sweet flag).